We begin with the raw amino-acid sequence, 82 residues long: EMBRYO SURROUNDING FACTOR 1.2 (82 aa).

The first 23 residues, 1-23, serve as a signal peptide directing secretion; it reads MKSQTVLISIFIFSFFALHQCMQ. Cystine bridges form between Cys-40/Cys-56, Cys-45/Cys-77, Cys-54/Cys-71, and Cys-57/Cys-64.

The protein belongs to the MEG family. In terms of tissue distribution, expressed exclusively in ovule embryo sacs and in early developing endosperms.

Maternally-contributed central cell peptide regulating suspensor development and correct auxin distribution in early developing embryos. In Arabidopsis thaliana (Mouse-ear cress), this protein is EMBRYO SURROUNDING FACTOR 1.2 (ESF1.2).